The sequence spans 340 residues: uncharacterized protein (340 aa).

It is found in the virion. This is an uncharacterized protein from Acanthamoeba polyphaga (Amoeba).